We begin with the raw amino-acid sequence, 44 residues long: Antibacterial protein 3 homolog (44 aa).

Belongs to the staphylococcal hemolytic protein family.

Its subcellular location is the secreted. In terms of biological role, has hemolytic activity and also inhibits the growth of gonococci. In Staphylococcus haemolyticus (strain JCSC1435), this protein is Antibacterial protein 3 homolog.